Consider the following 271-residue polypeptide: Glutamate racemase 3 (271 aa).

Substrate-binding positions include Asp15–Ser16 and Tyr47–Gly48. The Proton donor/acceptor role is filled by Cys78. Residue Asn79–Thr80 participates in substrate binding. Cys185 (proton donor/acceptor) is an active-site residue. Position 186-187 (Thr186–His187) interacts with substrate.

It belongs to the aspartate/glutamate racemases family.

It carries out the reaction L-glutamate = D-glutamate. It participates in cell wall biogenesis; peptidoglycan biosynthesis. Functionally, provides the (R)-glutamate required for cell wall biosynthesis. The protein is Glutamate racemase 3 of Caldanaerobacter subterraneus subsp. tengcongensis (strain DSM 15242 / JCM 11007 / NBRC 100824 / MB4) (Thermoanaerobacter tengcongensis).